Consider the following 1353-residue polypeptide: Trifunctional purine biosynthetic protein adenosine-3 (1353 aa).

In terms of domain architecture, ATP-grasp spans 114 to 321; the sequence is KDFMLRHGIP…LFDVMEACCS (208 aa). ATP is bound by residues 193 to 196, glutamate 200, arginine 223, and asparagine 232; that span reads EELL. Mg(2+) is bound by residues glutamate 291 and asparagine 293. The interval 441–1155 is AIRS domain; it reads GLSYKDSGVD…QKMLSQRRKR (715 aa). A phosphoserine mark is found at serine 814 and serine 816. The tract at residues 1153–1353 is GART domain; that stretch reads RKRVAVLISG…ALISPEVSSQ (201 aa). 1164–1166 contributes to the N(1)-(5-phospho-beta-D-ribosyl)glycinamide binding site; it reads GSN. (6R)-10-formyltetrahydrofolate is bound by residues arginine 1219, 1244-1247, and asparagine 1261; that span reads MRVL. Histidine 1263 functions as the Proton donor in the catalytic mechanism. Position 1295–1299 (1295–1299) interacts with (6R)-10-formyltetrahydrofolate; sequence DEGVD. 1325–1328 is a N(1)-(5-phospho-beta-D-ribosyl)glycinamide binding site; sequence HKAE.

This sequence in the N-terminal section; belongs to the GARS family. The protein in the central section; belongs to the AIR synthase family. It in the C-terminal section; belongs to the GART family. Homodimer. Mg(2+) serves as cofactor. It depends on Mn(2+) as a cofactor.

The catalysed reaction is 5-phospho-beta-D-ribosylamine + glycine + ATP = N(1)-(5-phospho-beta-D-ribosyl)glycinamide + ADP + phosphate + H(+). It catalyses the reaction 2-formamido-N(1)-(5-O-phospho-beta-D-ribosyl)acetamidine + ATP = 5-amino-1-(5-phospho-beta-D-ribosyl)imidazole + ADP + phosphate + H(+). It carries out the reaction N(1)-(5-phospho-beta-D-ribosyl)glycinamide + (6R)-10-formyltetrahydrofolate = N(2)-formyl-N(1)-(5-phospho-beta-D-ribosyl)glycinamide + (6S)-5,6,7,8-tetrahydrofolate + H(+). It functions in the pathway purine metabolism; IMP biosynthesis via de novo pathway; 5-amino-1-(5-phospho-D-ribosyl)imidazole from N(2)-formyl-N(1)-(5-phospho-D-ribosyl)glycinamide: step 2/2. Its pathway is purine metabolism; IMP biosynthesis via de novo pathway; N(1)-(5-phospho-D-ribosyl)glycinamide from 5-phospho-alpha-D-ribose 1-diphosphate: step 2/2. The protein operates within purine metabolism; IMP biosynthesis via de novo pathway; N(2)-formyl-N(1)-(5-phospho-D-ribosyl)glycinamide from N(1)-(5-phospho-D-ribosyl)glycinamide (10-formyl THF route): step 1/1. In terms of biological role, trifunctional enzyme that catalyzes three distinct reactions as part of the 'de novo' inosine monophosphate biosynthetic pathway. This Drosophila melanogaster (Fruit fly) protein is Trifunctional purine biosynthetic protein adenosine-3.